Here is a 315-residue protein sequence, read N- to C-terminus: Acetyl-coenzyme A carboxylase carboxyl transferase subunit beta, chloroplastic (315 aa).

Residues 47–315 (LWTRCDSCEN…VYKESNSYLF (269 aa)) form the CoA carboxyltransferase N-terminal domain. Cys51, Cys54, Cys70, and Cys73 together coordinate Zn(2+). The C4-type zinc-finger motif lies at 51 to 73 (CDSCENMLYVRFLKQNKRICEEC).

It belongs to the AccD/PCCB family. As to quaternary structure, acetyl-CoA carboxylase is a heterohexamer composed of biotin carboxyl carrier protein, biotin carboxylase and 2 subunits each of ACCase subunit alpha and ACCase plastid-coded subunit beta (accD). Zn(2+) serves as cofactor.

Its subcellular location is the plastid. It is found in the chloroplast stroma. The enzyme catalyses N(6)-carboxybiotinyl-L-lysyl-[protein] + acetyl-CoA = N(6)-biotinyl-L-lysyl-[protein] + malonyl-CoA. It participates in lipid metabolism; malonyl-CoA biosynthesis; malonyl-CoA from acetyl-CoA: step 1/1. Its function is as follows. Component of the acetyl coenzyme A carboxylase (ACC) complex. Biotin carboxylase (BC) catalyzes the carboxylation of biotin on its carrier protein (BCCP) and then the CO(2) group is transferred by the transcarboxylase to acetyl-CoA to form malonyl-CoA. The polypeptide is Acetyl-coenzyme A carboxylase carboxyl transferase subunit beta, chloroplastic (Physcomitrium patens (Spreading-leaved earth moss)).